We begin with the raw amino-acid sequence, 356 residues long: Cyclin-D4-1 (356 aa).

It belongs to the cyclin family. Cyclin D subfamily.

The chain is Cyclin-D4-1 (CYCD4-1) from Oryza sativa subsp. japonica (Rice).